A 426-amino-acid chain; its full sequence is Histidine--tRNA ligase (426 aa).

It belongs to the class-II aminoacyl-tRNA synthetase family.

Its subcellular location is the cytoplasm. It catalyses the reaction tRNA(His) + L-histidine + ATP = L-histidyl-tRNA(His) + AMP + diphosphate + H(+). The chain is Histidine--tRNA ligase from Sulfurisphaera tokodaii (strain DSM 16993 / JCM 10545 / NBRC 100140 / 7) (Sulfolobus tokodaii).